Consider the following 239-residue polypeptide: Phosphoribosylaminoimidazole-succinocarboxamide synthase (239 aa).

The protein belongs to the SAICAR synthetase family.

The catalysed reaction is 5-amino-1-(5-phospho-D-ribosyl)imidazole-4-carboxylate + L-aspartate + ATP = (2S)-2-[5-amino-1-(5-phospho-beta-D-ribosyl)imidazole-4-carboxamido]succinate + ADP + phosphate + 2 H(+). It participates in purine metabolism; IMP biosynthesis via de novo pathway; 5-amino-1-(5-phospho-D-ribosyl)imidazole-4-carboxamide from 5-amino-1-(5-phospho-D-ribosyl)imidazole-4-carboxylate: step 1/2. The protein is Phosphoribosylaminoimidazole-succinocarboxamide synthase of Nitratiruptor sp. (strain SB155-2).